A 668-amino-acid chain; its full sequence is Packaging protein UL32 homolog (668 aa).

Polar residues predominate over residues 1–10; that stretch reads MNPSTHVSSN. The interval 1–35 is disordered; that stretch reads MNPSTHVSSNGPTTPPHGPHTTFLPPTSPAPSTSS. Residues 19-35 show a composition bias toward low complexity; sequence PHTTFLPPTSPAPSTSS. Zn(2+)-binding residues include cysteine 200, cysteine 203, histidine 276, and cysteine 282. The segment at 200 to 282 is zinc finger 1; sequence CNLCAIISIC…FHLHFFINRC (83 aa). Residues 401–430 form a disordered region; sequence IEEEEDEEGGEKGGDDPGRHNGGGTSGGFS. Residues 410–419 are compositionally biased toward basic and acidic residues; it reads GEKGGDDPGR. Cysteine 459, cysteine 462, histidine 567, and cysteine 574 together coordinate Zn(2+). The zinc finger 2 stretch occupies residues 459–574; that stretch reads CLLCELMACS…YKHFFCDPQC (116 aa).

The protein belongs to the herpesviridae UL32 protein family.

It localises to the host cytoplasm. The protein localises to the host nucleus. In terms of biological role, plays a role in efficient localization of neo-synthesized capsids to nuclear replication compartments, thereby controlling cleavage and packaging of virus genomic DNA. The protein is Packaging protein UL32 homolog (UL52) of Homo sapiens (Human).